The primary structure comprises 362 residues: tRNA/tmRNA (uracil-C(5))-methyltransferase (362 aa).

Positions 186, 214, 219, 235, and 295 each coordinate S-adenosyl-L-methionine. Cys-320 functions as the Nucleophile in the catalytic mechanism. Glu-354 acts as the Proton acceptor in catalysis.

It belongs to the class I-like SAM-binding methyltransferase superfamily. RNA M5U methyltransferase family. TrmA subfamily.

It carries out the reaction uridine(54) in tRNA + S-adenosyl-L-methionine = 5-methyluridine(54) in tRNA + S-adenosyl-L-homocysteine + H(+). It catalyses the reaction uridine(341) in tmRNA + S-adenosyl-L-methionine = 5-methyluridine(341) in tmRNA + S-adenosyl-L-homocysteine + H(+). In terms of biological role, dual-specificity methyltransferase that catalyzes the formation of 5-methyluridine at position 54 (m5U54) in all tRNAs, and that of position 341 (m5U341) in tmRNA (transfer-mRNA). This Stutzerimonas stutzeri (strain A1501) (Pseudomonas stutzeri) protein is tRNA/tmRNA (uracil-C(5))-methyltransferase.